The primary structure comprises 411 residues: Argininosuccinate synthase (411 aa).

11–19 (AYSGGLDTS) contributes to the ATP binding site. Tyrosine 88 serves as a coordination point for L-citrulline. ATP is bound at residue glycine 118. Residues threonine 120, asparagine 124, and aspartate 125 each coordinate L-aspartate. Asparagine 124 is a binding site for L-citrulline. The L-citrulline site is built by arginine 128, serine 176, glutamate 261, and tyrosine 273.

It belongs to the argininosuccinate synthase family. Type 1 subfamily. Homotetramer.

It localises to the cytoplasm. It carries out the reaction L-citrulline + L-aspartate + ATP = 2-(N(omega)-L-arginino)succinate + AMP + diphosphate + H(+). Its pathway is amino-acid biosynthesis; L-arginine biosynthesis; L-arginine from L-ornithine and carbamoyl phosphate: step 2/3. The sequence is that of Argininosuccinate synthase from Lactiplantibacillus plantarum (strain ATCC BAA-793 / NCIMB 8826 / WCFS1) (Lactobacillus plantarum).